The chain runs to 882 residues: Alanine--tRNA ligase (882 aa).

His570, His574, Cys672, and His676 together coordinate Zn(2+).

This sequence belongs to the class-II aminoacyl-tRNA synthetase family. Requires Zn(2+) as cofactor.

It is found in the cytoplasm. It catalyses the reaction tRNA(Ala) + L-alanine + ATP = L-alanyl-tRNA(Ala) + AMP + diphosphate. In terms of biological role, catalyzes the attachment of alanine to tRNA(Ala) in a two-step reaction: alanine is first activated by ATP to form Ala-AMP and then transferred to the acceptor end of tRNA(Ala). Also edits incorrectly charged Ser-tRNA(Ala) and Gly-tRNA(Ala) via its editing domain. The sequence is that of Alanine--tRNA ligase from Xanthomonas campestris pv. campestris (strain B100).